The chain runs to 137 residues: uncharacterized protein (137 aa).

A helical membrane pass occupies residues 20–42 (TVLAFKGEGALALAGLLVMAAVA).

The protein localises to the host membrane. This is an uncharacterized protein from Dryophytes versicolor (chameleon treefrog).